The primary structure comprises 264 residues: 3-methyl-2-oxobutanoate hydroxymethyltransferase (264 aa).

Positions 45 and 84 each coordinate Mg(2+). Residues 45–46 (DS), aspartate 84, and lysine 112 contribute to the 3-methyl-2-oxobutanoate site. Residue glutamate 114 participates in Mg(2+) binding. Glutamate 181 functions as the Proton acceptor in the catalytic mechanism.

The protein belongs to the PanB family. As to quaternary structure, homodecamer; pentamer of dimers. It depends on Mg(2+) as a cofactor.

Its subcellular location is the cytoplasm. The enzyme catalyses 3-methyl-2-oxobutanoate + (6R)-5,10-methylene-5,6,7,8-tetrahydrofolate + H2O = 2-dehydropantoate + (6S)-5,6,7,8-tetrahydrofolate. It functions in the pathway cofactor biosynthesis; (R)-pantothenate biosynthesis; (R)-pantoate from 3-methyl-2-oxobutanoate: step 1/2. Catalyzes the reversible reaction in which hydroxymethyl group from 5,10-methylenetetrahydrofolate is transferred onto alpha-ketoisovalerate to form ketopantoate. The sequence is that of 3-methyl-2-oxobutanoate hydroxymethyltransferase from Shewanella piezotolerans (strain WP3 / JCM 13877).